Consider the following 478-residue polypeptide: Ankyrin repeat and BTB/POZ domain-containing protein 1 (478 aa).

ANK repeat units lie at residues 1-31 (MDTS…EVNV) and 35-64 (WDST…RCEA). 2 consecutive BTB domains span residues 115 to 182 (SDVV…DIGV) and 272 to 346 (PDIC…ELPP). Residues 450-478 (TVQTYSAIEEAQQQLRALENLLVSIGLDC) adopt a coiled-coil conformation.

The protein resides in the cytoplasm. May act as a mediator of the PTEN growth-suppressive signaling pathway. May play a role in developmental processes. This Rattus norvegicus (Rat) protein is Ankyrin repeat and BTB/POZ domain-containing protein 1.